Here is a 290-residue protein sequence, read N- to C-terminus: Type II restriction enzyme MjaIII (290 aa).

It belongs to the DpnII type II restriction endonuclease family.

The catalysed reaction is Endonucleolytic cleavage of DNA to give specific double-stranded fragments with terminal 5'-phosphates.. In terms of biological role, a P subtype restriction enzyme that recognizes the double-stranded sequence 5'-GATC-3'; the cleavage site is unknown. This is Type II restriction enzyme MjaIII (mjaIIIR) from Methanocaldococcus jannaschii (strain ATCC 43067 / DSM 2661 / JAL-1 / JCM 10045 / NBRC 100440) (Methanococcus jannaschii).